Reading from the N-terminus, the 207-residue chain is Histidine biosynthesis bifunctional protein HisIE (207 aa).

Residues 1–117 form a phosphoribosyl-AMP cyclohydrolase region; sequence MSLVTTINWE…GKQEQPALVF (117 aa). The tract at residues 118-207 is phosphoribosyl-ATP pyrophosphohydrolase; it reads LHQLEQVLAN…TEKLQERHNK (90 aa).

This sequence in the N-terminal section; belongs to the PRA-CH family. The protein in the C-terminal section; belongs to the PRA-PH family.

The protein localises to the cytoplasm. It carries out the reaction 1-(5-phospho-beta-D-ribosyl)-ATP + H2O = 1-(5-phospho-beta-D-ribosyl)-5'-AMP + diphosphate + H(+). The catalysed reaction is 1-(5-phospho-beta-D-ribosyl)-5'-AMP + H2O = 1-(5-phospho-beta-D-ribosyl)-5-[(5-phospho-beta-D-ribosylamino)methylideneamino]imidazole-4-carboxamide. It participates in amino-acid biosynthesis; L-histidine biosynthesis; L-histidine from 5-phospho-alpha-D-ribose 1-diphosphate: step 2/9. Its pathway is amino-acid biosynthesis; L-histidine biosynthesis; L-histidine from 5-phospho-alpha-D-ribose 1-diphosphate: step 3/9. This chain is Histidine biosynthesis bifunctional protein HisIE, found in Photobacterium profundum (strain SS9).